The sequence spans 88 residues: Large ribosomal subunit protein bL27 (88 aa).

The segment at 1–21 (MAHKKGQGSTQNNRDSAGRRL) is disordered.

Belongs to the bacterial ribosomal protein bL27 family.

The protein is Large ribosomal subunit protein bL27 of Helicobacter acinonychis (strain Sheeba).